The primary structure comprises 433 residues: GTPase Obg (433 aa).

Residues 2–160 (PTFVDQTKIE…RVLRLELKLL (159 aa)) enclose the Obg domain. Residues 161–334 (ADVGLVGFPS…LMNDTATLVE (174 aa)) form the OBG-type G domain. GTP contacts are provided by residues 167-174 (GFPSVGKS), 192-196 (FTTLT), 214-217 (DLPG), 284-287 (SQMD), and 315-317 (SSV). 2 residues coordinate Mg(2+): S174 and T194. Positions 355-433 (YKAPQRNEFM…IGKFVFEFVQ (79 aa)) constitute an OCT domain.

The protein belongs to the TRAFAC class OBG-HflX-like GTPase superfamily. OBG GTPase family. Monomer. Mg(2+) is required as a cofactor.

The protein resides in the cytoplasm. An essential GTPase which binds GTP, GDP and possibly (p)ppGpp with moderate affinity, with high nucleotide exchange rates and a fairly low GTP hydrolysis rate. Plays a role in control of the cell cycle, stress response, ribosome biogenesis and in those bacteria that undergo differentiation, in morphogenesis control. The sequence is that of GTPase Obg from Lactobacillus acidophilus (strain ATCC 700396 / NCK56 / N2 / NCFM).